A 392-amino-acid polypeptide reads, in one-letter code: Pannexin-3 (392 aa).

The Cytoplasmic segment spans residues Met-1–Lys-39. The chain crosses the membrane as a helical span at residues Phe-40 to Ser-60. At Gly-61 to Ser-113 the chain is on the extracellular side. N-linked (GlcNAc...) asparagine glycosylation occurs at Asn-71. The helical transmembrane segment at Leu-114–Pro-134 threads the bilayer. Over Ser-135–Leu-215 the chain is Cytoplasmic. A helical membrane pass occupies residues Leu-216–Phe-236. The Extracellular portion of the chain corresponds to Gln-237–Ser-267. A helical transmembrane segment spans residues Val-268–Ile-288. The Cytoplasmic segment spans residues Tyr-289 to Ala-392.

Belongs to the pannexin family. As to quaternary structure, homoheptameric. Post-translationally, N-glycosylation may play a role in cell surface targeting. As to expression, expressed in skin, cartilage, heart, lung, liver, spleen, thymus and kidney. Not expressed in brain. Expressed in calvarial cells.

Its subcellular location is the cell membrane. The protein resides in the endoplasmic reticulum membrane. The enzyme catalyses Ca(2+)(in) = Ca(2+)(out). It catalyses the reaction ATP(in) = ATP(out). Functionally, regulator of osteoblast differentiation by functionning as a Ca(2+) channel in the endoplasmic reticulum which regulates calmodulin (CaM) pathways. Allows ATP release into the extracellular space and activation or purinergic receptors. The polypeptide is Pannexin-3 (Panx3) (Mus musculus (Mouse)).